We begin with the raw amino-acid sequence, 426 residues long: Adenylosuccinate synthetase (426 aa).

Residues 12–18 (GDEGKGK) and 40–42 (GHT) each bind GTP. D13 acts as the Proton acceptor in catalysis. The Mg(2+) site is built by D13 and G40. Residues 13-16 (DEGK), 38-41 (NAGH), T131, R145, Q226, T241, and R305 contribute to the IMP site. H41 acts as the Proton donor in catalysis. Position 301–307 (301–307 (ATTGRKR)) interacts with substrate. GTP-binding positions include R307, 333-335 (KLD), and 415-417 (SVG).

It belongs to the adenylosuccinate synthetase family. As to quaternary structure, homodimer. Mg(2+) is required as a cofactor.

It is found in the cytoplasm. It catalyses the reaction IMP + L-aspartate + GTP = N(6)-(1,2-dicarboxyethyl)-AMP + GDP + phosphate + 2 H(+). It functions in the pathway purine metabolism; AMP biosynthesis via de novo pathway; AMP from IMP: step 1/2. Its function is as follows. Plays an important role in the de novo pathway of purine nucleotide biosynthesis. Catalyzes the first committed step in the biosynthesis of AMP from IMP. This Nitratidesulfovibrio vulgaris (strain DP4) (Desulfovibrio vulgaris) protein is Adenylosuccinate synthetase.